The following is a 702-amino-acid chain: Sodium/hydrogen exchanger 6 (702 aa).

The next 12 membrane-spanning stretches (helical) occupy residues 72 to 92 (SANL…IWLF), 104 to 124 (GLAM…IHVP), 177 to 197 (VTFD…FYAG), 212 to 232 (ILAY…SIMY), 253 to 273 (CLLF…AIFH), 279 to 299 (VELY…AIVL), 325 to 345 (IGIF…TGVV), 373 to 393 (TFLL…FCGI), 415 to 435 (FELL…LTLF), 437 to 457 (FQNH…IFLG), 480 to 500 (NFQH…ALAI), and 516 to 536 (LLIV…MLSC).

It belongs to the monovalent cation:proton antiporter 1 (CPA1) transporter (TC 2.A.36) family. Homodimer. Interacts with RACK1; regulates the distribution of SLC9A6 between endosomes and the plasma membrane. In terms of processing, ubiquitinated (in vitro). Glycosylated.

The protein resides in the endosome membrane. It is found in the recycling endosome membrane. The protein localises to the early endosome membrane. It localises to the late endosome membrane. Its subcellular location is the cell membrane. The catalysed reaction is Na(+)(in) + H(+)(out) = Na(+)(out) + H(+)(in). The enzyme catalyses K(+)(in) + H(+)(out) = K(+)(out) + H(+)(in). In terms of biological role, endosomal Na(+), K(+)/H(+) antiporter. Mediates the electroneutral exchange of endosomal luminal H(+) for a cytosolic Na(+) or K(+). By facilitating proton efflux, SLC9A6 counteracts the acidity generated by vacuolar (V)-ATPase, thereby limiting luminal acidification. Responsible for alkalizing and maintaining the endosomal pH, and consequently in, e.g., endosome maturation and trafficking of recycling endosomal cargo. Plays a critical role during neurodevelopment by regulating synaptic development and plasticity. Implicated in the maintenance of cell polarity in a manner that is dependent on its ability to modulate intravesicular pH. Regulates intracelular pH in some specialized cells, osteoclasts and stereocilia where this transporter localizes to the plasma membrane. This chain is Sodium/hydrogen exchanger 6 (Slc9a6), found in Mus musculus (Mouse).